The following is a 392-amino-acid chain: Erythronate-4-phosphate dehydrogenase (392 aa).

The substrate site is built by S48 and T69. D149 is a binding site for NAD(+). R215 is a catalytic residue. D239 serves as a coordination point for NAD(+). E244 is an active-site residue. The active-site Proton donor is H261. Position 264 (G264) interacts with NAD(+). Position 265 (Y265) interacts with substrate.

The protein belongs to the D-isomer specific 2-hydroxyacid dehydrogenase family. PdxB subfamily. As to quaternary structure, homodimer.

Its subcellular location is the cytoplasm. It catalyses the reaction 4-phospho-D-erythronate + NAD(+) = (R)-3-hydroxy-2-oxo-4-phosphooxybutanoate + NADH + H(+). It participates in cofactor biosynthesis; pyridoxine 5'-phosphate biosynthesis; pyridoxine 5'-phosphate from D-erythrose 4-phosphate: step 2/5. Its function is as follows. Catalyzes the oxidation of erythronate-4-phosphate to 3-hydroxy-2-oxo-4-phosphonooxybutanoate. This Salinibacter ruber (strain DSM 13855 / M31) protein is Erythronate-4-phosphate dehydrogenase.